We begin with the raw amino-acid sequence, 199 residues long: Mediator of RNA polymerase II transcription subunit 10 (199 aa).

The protein belongs to the Mediator complex subunit 10 family. As to quaternary structure, component of the Mediator complex.

Its subcellular location is the nucleus. In terms of biological role, component of the Mediator complex, a coactivator involved in the regulated transcription of nearly all RNA polymerase II-dependent genes. Mediator functions as a bridge to convey information from gene-specific regulatory proteins to the basal RNA polymerase II transcription machinery. Mediator is recruited to promoters by direct interactions with regulatory proteins and serves as a scaffold for the assembly of a functional preinitiation complex with RNA polymerase II and the general transcription factors. The polypeptide is Mediator of RNA polymerase II transcription subunit 10 (NUT2) (Candida glabrata (strain ATCC 2001 / BCRC 20586 / JCM 3761 / NBRC 0622 / NRRL Y-65 / CBS 138) (Yeast)).